Here is a 95-residue protein sequence, read N- to C-terminus: Pyruvate dehydrogenase inhibitor (95 aa).

This sequence belongs to the HesB/IscA family. Interacts with the E1 module of pyruvate dehydrogenase (PdhA-PdhB).

Acts as an inhibitor of the pyruvate dehydrogenase. Overexpression does not affect growth with glucose as the main carbon source, but it leads to a dramatic growth defect when cells are grown with pyruvate as the sole carbon source. The protein is Pyruvate dehydrogenase inhibitor of Bacillus subtilis (strain 168).